The sequence spans 464 residues: Serine protease PepD (464 aa).

The interval 1 to 71 is disordered; sequence MAKLARVVGL…TQYRQPYEAL (71 aa). Residues 1 to 100 are Cytoplasmic-facing; it reads MAKLARVVGL…GMVRQRPRAG (100 aa). Positions 39 to 48 are enriched in low complexity; that stretch reads QGQQQTYSQQ. The chain crosses the membrane as a helical span at residues 101-121; sequence MLAIGAVTIAVVSAGIGGAAA. The Periplasmic portion of the chain corresponds to 122–464; sequence SLVGFNRAPA…VQVTLGKAEQ (343 aa). Catalysis depends on charge relay system residues His-197, Asp-236, and Ser-317. One can recognise a PDZ domain in the interval 368 to 449; it reads LISTGKASHA…TVALTFQDPS (82 aa).

This sequence belongs to the peptidase S1C family. As to quaternary structure, homotrimer. Interacts with numerous proteins, including the 35 kDa antigen PspA.

It localises to the cell inner membrane. It is found in the secreted. The protein resides in the cell wall. The catalysed reaction is Acts on substrates that are at least partially unfolded. The cleavage site P1 residue is normally between a pair of hydrophobic residues, such as Val-|-Val.. With respect to regulation, probably regulates its own activity by autocleavage, which removes the PDZ domain. Inhibited by the serine protease inhibitor diisopropylfluorophosphate (DFP). Inhibited by fluoroquinolone such as ciprofloxacin, moxifloxacin and ofloxacin and their analogs. Functionally, required for virulence. Acts both as a protease, which degrades and/or refolds damaged substrate targets, and as a chaperone. Plays an important role in the stress response network mediated through the two-component regulatory system MprAB and SigE signaling networks. May utilize its PDZ domain to recognize and process misfolded proteins at the cell membrane, leading to activation of the MprAB and SigE signaling pathways and subsequent establishment of a positive feedback loop that facilitates bacterial adaptation. Interacts with and potentially cleaves several proteins, including the 35 kDa antigen PspA. Proteolytic cleavage of PspA may help to maintain cell envelope homeostasis in Mycobacterium and regulate specific stress response pathways during periods of extracytoplasmic stress. In vitro, exhibits proteolytic activity against the artificial substrate beta-casein. The polypeptide is Serine protease PepD (Mycobacterium tuberculosis (strain ATCC 25618 / H37Rv)).